The chain runs to 508 residues: Cytochrome P450 4A12B (508 aa).

Positions M1–L37 are cleaved as a signal peptide. Residues E319 and C455 each coordinate heme.

The protein belongs to the cytochrome P450 family. Requires heme as cofactor. As to expression, expressed in lung, but almost undetectable in the kidneys of five different strains.

It is found in the endoplasmic reticulum membrane. The protein resides in the microsome membrane. The catalysed reaction is an organic molecule + reduced [NADPH--hemoprotein reductase] + O2 = an alcohol + oxidized [NADPH--hemoprotein reductase] + H2O + H(+). The enzyme catalyses dodecanoate + reduced [NADPH--hemoprotein reductase] + O2 = 11-hydroxydodecanoate + oxidized [NADPH--hemoprotein reductase] + H2O + H(+). It carries out the reaction dodecanoate + reduced [NADPH--hemoprotein reductase] + O2 = 12-hydroxydodecanoate + oxidized [NADPH--hemoprotein reductase] + H2O + H(+). It catalyses the reaction (5Z,8Z,11Z,14Z)-eicosatetraenoate + reduced [NADPH--hemoprotein reductase] + O2 = 18-hydroxy-(5Z,8Z,11Z,14Z)-eicosatetraenoate + oxidized [NADPH--hemoprotein reductase] + H2O + H(+). The catalysed reaction is (5Z,8Z,11Z,14Z)-eicosatetraenoate + reduced [NADPH--hemoprotein reductase] + O2 = 19-hydroxy-(5Z,8Z,11Z,14Z)-eicosatetraenoate + oxidized [NADPH--hemoprotein reductase] + H2O + H(+). The enzyme catalyses (5Z,8Z,11Z,14Z)-eicosatetraenoate + reduced [NADPH--hemoprotein reductase] + O2 = 20-hydroxy-(5Z,8Z,11Z,14Z)-eicosatetraenoate + oxidized [NADPH--hemoprotein reductase] + H2O + H(+). It carries out the reaction (5Z,8Z,11Z,14Z,17Z)-eicosapentaenoate + reduced [NADPH--hemoprotein reductase] + O2 = 19-hydroxy-(5Z,8Z,11Z,14Z,17Z)-eicosapentaenoate + oxidized [NADPH--hemoprotein reductase] + H2O + H(+). It catalyses the reaction (5Z,8Z,11Z,14Z,17Z)-eicosapentaenoate + reduced [NADPH--hemoprotein reductase] + O2 = 20-hydroxy-(5Z,8Z,11Z,14Z,17Z)-eicosapentaenoate + oxidized [NADPH--hemoprotein reductase] + H2O + H(+). The catalysed reaction is (5Z,8Z,11Z,14Z,17Z)-eicosapentaenoate + reduced [NADPH--hemoprotein reductase] + O2 = (17S,18R)-epoxy-(5Z,8Z,11Z,14Z)-eicosatetraenoate + oxidized [NADPH--hemoprotein reductase] + H2O + H(+). The enzyme catalyses (5Z,8Z,11Z,14Z,17Z)-eicosapentaenoate + reduced [NADPH--hemoprotein reductase] + O2 = (17R,18S)-epoxy-(5Z,8Z,11Z,14Z)-eicosatetraenoate + oxidized [NADPH--hemoprotein reductase] + H2O + H(+). The protein operates within lipid metabolism; fatty acid metabolism. Its activity is regulated as follows. Activated by cytochrome b5. The Vmax almost doubles in the presence of cytochrome b5. Its function is as follows. A cytochrome P450 monooxygenase involved in the metabolism of fatty acids and their oxygenated derivatives (oxylipins). Mechanistically, uses molecular oxygen inserting one oxygen atom into a substrate, and reducing the second into a water molecule, with two electrons provided by NADPH via cytochrome P450 reductase (CPR; NADPH-ferrihemoprotein reductase). Catalyzes predominantly the oxidation of the terminal carbon (omega-oxidation) of saturated and unsaturated fatty acids. May act as a major omega-hydroxylase for dodecanoic (lauric) acid in kidney. Participates in omega-hydroxylation of (5Z,8Z,11Z,14Z)-eicosatetraenoic acid (arachidonate) to 20-hydroxyeicosatetraenoic acid (20-HETE), a signaling molecule acting both as vasoconstrictive and natriuretic with overall effect on arterial blood pressure. Acts as an omega-hydroxylase and epoxidase toward (5Z,8Z,11Z,14Z,17Z)-eicosapentaenoc acid (EPA). Catalyzes the epoxidation of the last double bond of EPA with no preferred stereoselectivity, producing both (R,S) and (S,R) stereoisomers. Can also catalyze the omega-1 and omega-2 oxidation of fatty acids with lower efficiency. This Mus musculus (Mouse) protein is Cytochrome P450 4A12B.